The following is a 427-amino-acid chain: Inward rectifier potassium channel 2 (427 aa).

Residues 1 to 81 lie on the Cytoplasmic side of the membrane; that stretch reads MGSVRTNRYS…IFTTCVDIRW (81 aa). An S-nitrosocysteine modification is found at Cys-76. Residues 82 to 106 traverse the membrane as a helical segment; the sequence is RWMLVIFCLAFVLSWLFFGCVFWLI. Residues 107–128 are Extracellular-facing; sequence ALLHGDLDASKESKACVSEVNS. Residues 129-140 constitute an intramembrane region (helical; Pore-forming); that stretch reads FTAAFLFSIETQ. The pore-forming intramembrane region spans 141–147; sequence TTIGYGF. Positions 142-147 match the Selectivity filter motif; that stretch reads TIGYGF. Residues 148–156 lie on the Extracellular side of the membrane; it reads RCVTDECPI. The chain crosses the membrane as a helical span at residues 157–178; that stretch reads AVFMVVFQSIVGCIIDAFIIGA. Topologically, residues 179 to 427 are cytoplasmic; it reads VMAKMAKPKK…PRPLRRESEI (249 aa). Residues 181–208 are polyphosphoinositide (PIP2)-binding; sequence AKMAKPKKRNETLVFSHNAVIAMRDGKL. The disordered stretch occupies residues 383–427; sequence TSKEEEDSENGVPESTSTDSPPGIDLHNQASVPLEPRPLRRESEI. A PDZ-binding motif is present at residues 425–427; the sequence is SEI.

Belongs to the inward rectifier-type potassium channel (TC 1.A.2.1) family. KCNJ2 subfamily. As to quaternary structure, homotetramer. Homomultimeric and heteromultimeric association with KCNJ4/Kir2.3. Can form heteromeric channels with Kir2.6/KCNJ18. Associates, via its PDZ-recognition domain, with a complex containing LIN7A, LIN7B, LIN7C, DLG1, CASK and APBA1. S-nitrosylation increases the open probability and inward rectifying currents. In terms of tissue distribution, prominently expressed in the central nervous system. Also found in other excitable tissues such as heart and skeletal muscle.

It is found in the cell membrane. It localises to the sarcolemma. The protein resides in the T-tubule. The enzyme catalyses K(+)(in) = K(+)(out). Its activity is regulated as follows. Activated by phosphatidylinositol 4,5 biphosphate (PtdIns(4,5)P2). Its function is as follows. Inward rectifier potassium channels are characterized by a greater tendency to allow potassium to flow into the cell rather than out of it. Their voltage dependence is regulated by the concentration of extracellular potassium; as external potassium is raised, the voltage range of the channel opening shifts to more positive voltages. The inward rectification is mainly due to the blockage of outward current by internal magnesium. Can be blocked by extracellular barium and cesium. Probably participates in establishing action potential waveform and excitability of neuronal and muscle tissues. This chain is Inward rectifier potassium channel 2 (Kcnj2), found in Rattus norvegicus (Rat).